The chain runs to 70 residues: DNA-binding transcriptional activator AlpA (70 aa).

The H-T-H motif DNA-binding region spans 12-31 (LPAVIQKTGMARATIYDWLN).

Positive regulator of the expression of the slpA gene. When overexpressed, leads to suppression of the capsule overproduction and UV sensitivity phenotypes of cells mutant for the Lon ATP-dependent protease. Part of the cryptic P4-like prophage CP4-57. Overexpression of AlpA leads to excision of the CP4-57 prophage by IntA. This inactivates ssrA (the gene upstream of the prophage) that encodes tmRNA which is required to rescue stalled ribosomes in a process known as trans-translation. This is DNA-binding transcriptional activator AlpA from Escherichia coli (strain K12).